The primary structure comprises 1576 residues: Pentafunctional AROM polypeptide (1576 aa).

Residues 1-387 form a 3-dehydroquinate synthase region; it reads MGSTTFENPT…YEPKASVVED (387 aa). NAD(+)-binding positions include 49–51, 86–89, 117–119, and D122; these read DTN, ENSK, and GGV. R133 contacts 7-phospho-2-dehydro-3-deoxy-D-arabino-heptonate. 142 to 143 serves as a coordination point for NAD(+); sequence TT. 2 residues coordinate 7-phospho-2-dehydro-3-deoxy-D-arabino-heptonate: D149 and K155. Position 164 (K164) interacts with NAD(+). N165 is a 7-phospho-2-dehydro-3-deoxy-D-arabino-heptonate binding site. NAD(+) contacts are provided by residues 182-185 and N193; that span reads FLET. Residue E197 participates in Zn(2+) binding. Residues 197-200 and K253 contribute to the 7-phospho-2-dehydro-3-deoxy-D-arabino-heptonate site; that span reads EVVK. The active-site Proton acceptor; for 3-dehydroquinate synthase activity is the E263. 7-phospho-2-dehydro-3-deoxy-D-arabino-heptonate-binding positions include 267–271 and H274; that span reads RNILN. Residue H274 coordinates Zn(2+). The active-site Proton acceptor; for 3-dehydroquinate synthase activity is H278. 7-phospho-2-dehydro-3-deoxy-D-arabino-heptonate-binding residues include H290 and K359. H290 provides a ligand contact to Zn(2+). The tract at residues 400–841 is EPSP synthase; that stretch reads VRPSVPETLN…WDILSKSFQV (442 aa). Residue C823 is the For EPSP synthase activity of the active site. A shikimate kinase region spans residues 863–1055; sequence DKSIFIIGMR…RNKPQSFFVS (193 aa). An ATP-binding site is contributed by 870–877; the sequence is GMRGAGKT. Residues 1056–1276 are 3-dehydroquinase; the sequence is LTMPDISGAA…AAPGQLSAAE (221 aa). Residue H1179 is the Proton acceptor; for 3-dehydroquinate dehydratase activity of the active site. K1207 functions as the Schiff-base intermediate with substrate; for 3-dehydroquinate dehydratase activity in the catalytic mechanism. The interval 1289 to 1576 is shikimate dehydrogenase; sequence PKSFYLFGTP…RAAVMGDSTA (288 aa).

It in the N-terminal section; belongs to the sugar phosphate cyclases superfamily. Dehydroquinate synthase family. In the 2nd section; belongs to the EPSP synthase family. This sequence in the 3rd section; belongs to the shikimate kinase family. The protein in the 4th section; belongs to the type-I 3-dehydroquinase family. It in the C-terminal section; belongs to the shikimate dehydrogenase family. Homodimer. Zn(2+) serves as cofactor.

The protein resides in the cytoplasm. The enzyme catalyses 7-phospho-2-dehydro-3-deoxy-D-arabino-heptonate = 3-dehydroquinate + phosphate. It carries out the reaction 3-dehydroquinate = 3-dehydroshikimate + H2O. The catalysed reaction is shikimate + NADP(+) = 3-dehydroshikimate + NADPH + H(+). It catalyses the reaction shikimate + ATP = 3-phosphoshikimate + ADP + H(+). The enzyme catalyses 3-phosphoshikimate + phosphoenolpyruvate = 5-O-(1-carboxyvinyl)-3-phosphoshikimate + phosphate. Its pathway is metabolic intermediate biosynthesis; chorismate biosynthesis; chorismate from D-erythrose 4-phosphate and phosphoenolpyruvate: step 2/7. It participates in metabolic intermediate biosynthesis; chorismate biosynthesis; chorismate from D-erythrose 4-phosphate and phosphoenolpyruvate: step 3/7. The protein operates within metabolic intermediate biosynthesis; chorismate biosynthesis; chorismate from D-erythrose 4-phosphate and phosphoenolpyruvate: step 4/7. It functions in the pathway metabolic intermediate biosynthesis; chorismate biosynthesis; chorismate from D-erythrose 4-phosphate and phosphoenolpyruvate: step 5/7. Its pathway is metabolic intermediate biosynthesis; chorismate biosynthesis; chorismate from D-erythrose 4-phosphate and phosphoenolpyruvate: step 6/7. Its function is as follows. The AROM polypeptide catalyzes 5 consecutive enzymatic reactions in prechorismate polyaromatic amino acid biosynthesis. The protein is Pentafunctional AROM polypeptide of Sclerotinia sclerotiorum (strain ATCC 18683 / 1980 / Ss-1) (White mold).